The following is a 657-amino-acid chain: WD repeat-containing protein 70 (657 aa).

2 disordered regions span residues M1–L21 and F43–R172. Residues Q45–E78 are compositionally biased toward basic and acidic residues. Low complexity predominate over residues P82–D105. Acidic residues-rich tracts occupy residues S106–L119 and E150–N168. 7 WD repeats span residues H183–K222, C230–K271, G284–S324, G333–F372, D379–F418, P424–E469, and I472–A511. K299 is covalently cross-linked (Glycyl lysine isopeptide (Lys-Gly) (interchain with G-Cter in SUMO2)). Position 455 is an N6-acetyllysine (K455). Positions R543–E568 are enriched in basic and acidic residues. The segment at R543 to G584 is disordered. The span at P574 to G584 shows a compositional bias: gly residues. T582 bears the Phosphothreonine mark. Glycyl lysine isopeptide (Lys-Gly) (interchain with G-Cter in SUMO2) cross-links involve residues K593 and K599. 2 positions are modified to phosphoserine: S624 and S641. Residues T634 to I657 form a disordered region. The segment covering K647 to I657 has biased composition (basic and acidic residues).

Belongs to the WD repeat GAD-1 family.

This is WD repeat-containing protein 70 (Wdr70) from Mus musculus (Mouse).